Consider the following 365-residue polypeptide: Growth-regulating factor 7 (365 aa).

One can recognise a QLQ domain in the interval 59-94 (PFTNAQLKELERQAMIYKYMIASIPVPFDLLVSSPS). Residues 107–151 (DLEPGRCRRTDGKKWRCAKEVVSNHKYCEKHLHRGRPRSRKHVEP) enclose the WRC domain. 2 short sequence motifs (bipartite nuclear localization signal) span residues 112 to 122 (RCRRTDGKKWR) and 140 to 147 (RGRPRSRK). The segment covering 137–147 (HLHRGRPRSRK) has biased composition (basic residues). 2 disordered regions span residues 137 to 187 (HLHR…TLEP) and 332 to 365 (IESYSLMETPTPSSSPSRVMKKMTSSVSDESSQV). The segment covering 337-365 (LMETPTPSSSPSRVMKKMTSSVSDESSQV) has biased composition (polar residues).

It belongs to the GRF family.

It is found in the nucleus. Functionally, transcription activator that plays a role in the regulation of cell expansion in leaf and cotyledons tissues. Component of a network formed by miR396, the GRFs and their interacting factors (GIFs) acting in the regulation of meristem function, at least partially through the control of cell proliferation. This chain is Growth-regulating factor 7 (GRF7), found in Arabidopsis thaliana (Mouse-ear cress).